The chain runs to 422 residues: 3-carboxy-cis,cis-muconate cycloisomerase (422 aa).

Belongs to the class-II fumarase/aspartase family. In terms of assembly, homotetramer.

Its subcellular location is the cytoplasm. It catalyses the reaction 2-(carboxymethyl)-5-oxo-2,5-dihydro-2-furoate = 3-carboxy-cis,cis-muconate + H(+). Its pathway is aromatic compound metabolism; beta-ketoadipate pathway; 5-oxo-4,5-dihydro-2-furylacetate from 3-carboxy-cis,cis-muconate: step 1/2. Catalyzes an anti cycloisomerization. The protein is 3-carboxy-cis,cis-muconate cycloisomerase (pcaB) of Pseudomonas putida (Arthrobacter siderocapsulatus).